The sequence spans 298 residues: MKPIFRRVAVIGKYPGPGAVSASDSARQIIESIAQFVTQQDCELTLEAETAAHTGLTQYHTLDVEGIGRQCDLCLVVGGDGTMLGVGRRLAGYGTPLVGINQGRLGFITDIPLEGYQDALTPILHGDYEEDVRPLMQACVMRSGECVFEALALNDVVVNRGSTSGMVELRVEVDGVFVSNQRADGLIVASPTGSTAYALSAGGPMLHPSIPGWVLVPIAPHTLSNRPIVLSDATEVAIEVAGGRDISANFDMQSLASLQHGDRILVRRSAHRVCFLHPRGWSYFATLRKKLGWYEGGS.

The active-site Proton acceptor is Asp80. Residues 80 to 81 (DG), 154 to 155 (ND), Arg182, Asp184, 195 to 200 (TAYALS), Ala219, and Gln253 contribute to the NAD(+) site.

It belongs to the NAD kinase family. A divalent metal cation is required as a cofactor.

The protein resides in the cytoplasm. It catalyses the reaction NAD(+) + ATP = ADP + NADP(+) + H(+). Its function is as follows. Involved in the regulation of the intracellular balance of NAD and NADP, and is a key enzyme in the biosynthesis of NADP. Catalyzes specifically the phosphorylation on 2'-hydroxyl of the adenosine moiety of NAD to yield NADP. In Acidovorax sp. (strain JS42), this protein is NAD kinase.